The primary structure comprises 495 residues: Pentatricopeptide repeat-containing protein PPR5 homolog, chloroplastic (495 aa).

The tract at residues 1-24 is disordered; the sequence is MLAYPTTSSPWPPRHHGAAAAPAA. The N-terminal 29 residues, 1–29, are a transit peptide targeting the chloroplast; sequence MLAYPTTSSPWPPRHHGAAAAPAARRHMA. 9 PPR repeats span residues 120–154, 155–189, 195–229, 230–264, 265–299, 300–334, 335–365, 370–404, and 405–439; these read DNGI…GCRP, DTSV…MKTI, NIVT…PVSP, DIYT…QCRP, DVIT…KEKP, THPT…GFKP, NYVT…LVSS, HLSS…GAVP, and SAST…GIVP. Residues 455-495 form a disordered region; the sequence is DKKPRTVPSKNSASKPDVESANNSGTDTSSKPNLSVWQVAA. Residues 462–495 are compositionally biased toward polar residues; sequence PSKNSASKPDVESANNSGTDTSSKPNLSVWQVAA.

The protein belongs to the PPR family. P subfamily.

It localises to the plastid. Its subcellular location is the chloroplast. Functionally, involved in the biogenesis of the plastid translation machinery by promoting the splicing of group II introns in chloroplasts. The chain is Pentatricopeptide repeat-containing protein PPR5 homolog, chloroplastic from Oryza sativa subsp. japonica (Rice).